Reading from the N-terminus, the 67-residue chain is DNA-directed RNA polymerases I, II, and III subunit RPABC5 (67 aa).

Positions 7, 10, 44, and 45 each coordinate Zn(2+).

The protein belongs to the archaeal Rpo10/eukaryotic RPB10 RNA polymerase subunit family. In terms of assembly, component of the RNA polymerase I (Pol I), RNA polymerase II (Pol II) and RNA polymerase III (Pol III) complexes consisting of at least 13, 12 and 17 subunits, respectively.

It is found in the nucleus. Functionally, DNA-dependent RNA polymerase catalyzes the transcription of DNA into RNA using the four ribonucleoside triphosphates as substrates. Common component of RNA polymerases I, II and III which synthesize ribosomal RNA precursors, mRNA precursors and many functional non-coding RNAs, and a small RNAs, such as 5S rRNA and tRNAs, respectively. Pol II is the central component of the basal RNA polymerase II transcription machinery. Pols are composed of mobile elements that move relative to each other. In Pol II, Polr2L is part of the core element with the central large cleft. This chain is DNA-directed RNA polymerases I, II, and III subunit RPABC5, found in Drosophila melanogaster (Fruit fly).